The primary structure comprises 67 residues: Systemic RNA interference defective protein 5 (67 aa).

The Extracellular portion of the chain corresponds to 1–18 (MPSKNCAKNLHACQWERD). Residues 19–39 (IALVFLGLMVLFNIGQVVYMN) traverse the membrane as a helical segment. Over 40–67 (RARLYRLIRRGAEQIPADDEEPIIGIRD) the chain is Cytoplasmic.

In terms of tissue distribution, ubiquitously present in most tissues tested. Expressed in the somatic cells of intestine, muscle, neurons, somatic gonad and embryos but not in the germline (at protein level).

The protein resides in the late endosome membrane. Functionally, plays a role in RNA-mediated gene silencing by mediating transport of both ingested and endogenous dsRNA between cells. Not required for the uptake of dsRNA from the intestinal lumen. The sequence is that of Systemic RNA interference defective protein 5 from Caenorhabditis elegans.